The primary structure comprises 235 residues: Purine nucleoside phosphorylase DeoD-type (235 aa).

Position 4 (His4) interacts with a purine D-ribonucleoside. Residues Gly20, Arg24, Arg43, and 87–90 (RVGT) each bind phosphate. Residues 179-181 (EME) and 203-204 (SN) contribute to the a purine D-ribonucleoside site.

It belongs to the PNP/UDP phosphorylase family. In terms of assembly, homohexamer; trimer of homodimers.

It carries out the reaction a purine D-ribonucleoside + phosphate = a purine nucleobase + alpha-D-ribose 1-phosphate. The catalysed reaction is a purine 2'-deoxy-D-ribonucleoside + phosphate = a purine nucleobase + 2-deoxy-alpha-D-ribose 1-phosphate. In terms of biological role, catalyzes the reversible phosphorolytic breakdown of the N-glycosidic bond in the beta-(deoxy)ribonucleoside molecules, with the formation of the corresponding free purine bases and pentose-1-phosphate. This chain is Purine nucleoside phosphorylase DeoD-type, found in Levilactobacillus brevis (strain ATCC 367 / BCRC 12310 / CIP 105137 / JCM 1170 / LMG 11437 / NCIMB 947 / NCTC 947) (Lactobacillus brevis).